The sequence spans 173 residues: Adenine phosphoribosyltransferase (173 aa).

It belongs to the purine/pyrimidine phosphoribosyltransferase family. In terms of assembly, homodimer.

Its subcellular location is the cytoplasm. The enzyme catalyses AMP + diphosphate = 5-phospho-alpha-D-ribose 1-diphosphate + adenine. The protein operates within purine metabolism; AMP biosynthesis via salvage pathway; AMP from adenine: step 1/1. Catalyzes a salvage reaction resulting in the formation of AMP, that is energically less costly than de novo synthesis. In Thermotoga maritima (strain ATCC 43589 / DSM 3109 / JCM 10099 / NBRC 100826 / MSB8), this protein is Adenine phosphoribosyltransferase.